Consider the following 871-residue polypeptide: Metabotropic glutamate receptor 6 (871 aa).

The N-terminal stretch at 1-23 (MGRLPVLLLWLAWWLSQAGIACG) is a signal peptide. The Extracellular portion of the chain corresponds to 24-579 (AGSVRLAGGL…VVRLTWSSPW (556 aa)). A disulfide bridge links cysteine 51 with cysteine 93. Residues serine 148, 169–171 (AST), and tyrosine 219 each bind L-glutamate. 7 disulfides stabilise this stretch: cysteine 238/cysteine 530, cysteine 361/cysteine 377, cysteine 417/cysteine 424, cysteine 512/cysteine 531, cysteine 516/cysteine 534, cysteine 537/cysteine 549, and cysteine 552/cysteine 565. Residue asparagine 290 is glycosylated (N-linked (GlcNAc...) asparagine). Position 301 (aspartate 301) interacts with L-glutamate. Lysine 394 serves as a coordination point for L-glutamate. Asparagine 445 and asparagine 473 each carry an N-linked (GlcNAc...) asparagine glycan. A glycan (N-linked (GlcNAc...) asparagine) is linked at asparagine 561. The chain crosses the membrane as a helical span at residues 580–602 (AALPLLLAVLGIMATTTIMATFM). Topologically, residues 603–616 (RHNDTPIVRASGRE) are cytoplasmic. The chain crosses the membrane as a helical span at residues 617-637 (LSYVLLTGIFLIYAITFLMVA). At 638–648 (EPCAAICAARR) the chain is on the extracellular side. The helical transmembrane segment at 649–667 (LLLGLGTTLSYSALLTKTN) threads the bilayer. At 668–691 (RIYRIFEQGKRSVTPPPFISPTSQ) the chain is on the cytoplasmic side. The helical transmembrane segment at 692–712 (LVITFGLTSLQVVGVIAWLGA) threads the bilayer. Topologically, residues 713 to 742 (QPPHSVIDYEEQRTVDPEQARGVLKCDMSD) are extracellular. Residues 743–764 (LSLIGCLGYSLLLMVTCTVYAI) traverse the membrane as a helical segment. Residues 765 to 777 (KARGVPETFNEAK) are Cytoplasmic-facing. The helical transmembrane segment at 778 to 800 (PIGFTMYTTCIIWLAFVPIFFGT) threads the bilayer. The Extracellular segment spans residues 801 to 813 (AQSAEKIYIQTTT). A helical membrane pass occupies residues 814–839 (LTVSLSLSASVSLGMLYVPKTYVILF). Residues 840 to 871 (HPEQNVQKRKRSLKKTSTMAAPPQNENAEDAK) are Cytoplasmic-facing. Positions 850–871 (RSLKKTSTMAAPPQNENAEDAK) are disordered.

It belongs to the G-protein coupled receptor 3 family. Homodimer. Interacts with GPR179. Interacts with photoreceptor synaptic protein LRIT1 (via its N-terminal extracellular domain). In terms of tissue distribution, restricted expression in the inner nuclear layer of the retina.

It is found in the cell membrane. The protein localises to the endoplasmic reticulum membrane. Its subcellular location is the golgi apparatus membrane. The protein resides in the cell projection. It localises to the dendrite. Functionally, G-protein coupled receptor for glutamate. Ligand binding causes a conformation change that triggers signaling via guanine nucleotide-binding proteins (G proteins) and modulates the activity of down-stream effectors, such as adenylate cyclase. Signaling inhibits adenylate cyclase activity. Signaling stimulates TRPM1 channel activity and Ca(2+) uptake. Required for normal vision. This is Metabotropic glutamate receptor 6 (Grm6) from Rattus norvegicus (Rat).